Reading from the N-terminus, the 40-residue chain is Dolichyl-diphosphooligosaccharide--protein glycosyltransferase subunit 4 (40 aa).

Topologically, residues 1-4 (MITD) are lumenal. A helical transmembrane segment spans residues 5–25 (VQLAIFSNVLGVFLFLLVVAY). Over 26 to 40 (HYINANTGKSSPKAK) the chain is Cytoplasmic.

The protein belongs to the OST4 family. In terms of assembly, component of the oligosaccharyltransferase (OST) complex.

Its subcellular location is the endoplasmic reticulum membrane. Subunit of the oligosaccharyl transferase (OST) complex that catalyzes the initial transfer of a defined glycan (Glc(3)Man(9)GlcNAc(2) in eukaryotes) from the lipid carrier dolichol-pyrophosphate to an asparagine residue within an Asn-X-Ser/Thr consensus motif in nascent polypeptide chains, the first step in protein N-glycosylation. N-glycosylation occurs cotranslationally and the complex associates with the Sec61 complex at the channel-forming translocon complex that mediates protein translocation across the endoplasmic reticulum (ER). All subunits are required for a maximal enzyme activity. The chain is Dolichyl-diphosphooligosaccharide--protein glycosyltransferase subunit 4 from Drosophila persimilis (Fruit fly).